A 107-amino-acid polypeptide reads, in one-letter code: Phosphoribosyl-ATP pyrophosphatase (107 aa).

Belongs to the PRA-PH family.

The protein localises to the cytoplasm. It catalyses the reaction 1-(5-phospho-beta-D-ribosyl)-ATP + H2O = 1-(5-phospho-beta-D-ribosyl)-5'-AMP + diphosphate + H(+). It functions in the pathway amino-acid biosynthesis; L-histidine biosynthesis; L-histidine from 5-phospho-alpha-D-ribose 1-diphosphate: step 2/9. This chain is Phosphoribosyl-ATP pyrophosphatase, found in Bacillus cereus (strain ATCC 14579 / DSM 31 / CCUG 7414 / JCM 2152 / NBRC 15305 / NCIMB 9373 / NCTC 2599 / NRRL B-3711).